Here is a 542-residue protein sequence, read N- to C-terminus: CTP synthase (542 aa).

The interval 1–265 (MTRYVFITGG…DREVLGHFGL (265 aa)) is amidoligase domain. Ser-13 serves as a coordination point for CTP. Residue Ser-13 coordinates UTP. Residues 14-19 (SLGKGL) and Asp-71 contribute to the ATP site. Positions 71 and 139 each coordinate Mg(2+). CTP contacts are provided by residues 146–148 (DIE), 186–191 (KTKPTQ), and Lys-222. Residues 186–191 (KTKPTQ) and Lys-222 each bind UTP. One can recognise a Glutamine amidotransferase type-1 domain in the interval 291–541 (SIAIVGKYTG…VGAAIEQSRL (251 aa)). Residue Gly-353 participates in L-glutamine binding. Cys-380 (nucleophile; for glutamine hydrolysis) is an active-site residue. Residues 381-384 (FGMQ), Glu-404, and Arg-469 each bind L-glutamine. Residues His-514 and Glu-516 contribute to the active site.

It belongs to the CTP synthase family. As to quaternary structure, homotetramer.

It carries out the reaction UTP + L-glutamine + ATP + H2O = CTP + L-glutamate + ADP + phosphate + 2 H(+). The enzyme catalyses L-glutamine + H2O = L-glutamate + NH4(+). It catalyses the reaction UTP + NH4(+) + ATP = CTP + ADP + phosphate + 2 H(+). It participates in pyrimidine metabolism; CTP biosynthesis via de novo pathway; CTP from UDP: step 2/2. Allosterically activated by GTP, when glutamine is the substrate; GTP has no effect on the reaction when ammonia is the substrate. The allosteric effector GTP functions by stabilizing the protein conformation that binds the tetrahedral intermediate(s) formed during glutamine hydrolysis. Inhibited by the product CTP, via allosteric rather than competitive inhibition. Functionally, catalyzes the ATP-dependent amination of UTP to CTP with either L-glutamine or ammonia as the source of nitrogen. Regulates intracellular CTP levels through interactions with the four ribonucleotide triphosphates. In Methylobacterium radiotolerans (strain ATCC 27329 / DSM 1819 / JCM 2831 / NBRC 15690 / NCIMB 10815 / 0-1), this protein is CTP synthase.